The sequence spans 509 residues: DEAD-box ATP-dependent RNA helicase CshA (509 aa).

Residues 2–30 carry the Q motif motif; it reads QNFKELGISDKTVQTLEAMGFKEPTPIQK. One can recognise a Helicase ATP-binding domain in the interval 33 to 203; sequence IPYALEGDDI…QQFMKAPKII (171 aa). An ATP-binding site is contributed by 46-53; that stretch reads AQTGTGKT. A DEAD box motif is present at residues 150–153; it reads DEAD. The Helicase C-terminal domain maps to 214 to 375; sequence QIDEYYTIVK…LRPPHRKEVL (162 aa). Basic residues-rich tracts occupy residues 440-459 and 467-482; these read ARKNRSSKGGSRRSNHKRGN and RRSKGSKGQSSKKKNQ. The segment at 440-509 is disordered; the sequence is ARKNRSSKGG…KGRTFADHQK (70 aa). Residues 483–492 show a composition bias toward basic and acidic residues; sequence KKFDRRDKQQ.

This sequence belongs to the DEAD box helicase family. CshA subfamily. Oligomerizes, may be a member of the RNA degradosome.

It is found in the cytoplasm. It carries out the reaction ATP + H2O = ADP + phosphate + H(+). DEAD-box RNA helicase possibly involved in RNA degradation. Unwinds dsRNA in both 5'- and 3'-directions, has RNA-dependent ATPase activity. This Staphylococcus epidermidis (strain ATCC 35984 / DSM 28319 / BCRC 17069 / CCUG 31568 / BM 3577 / RP62A) protein is DEAD-box ATP-dependent RNA helicase CshA.